A 122-amino-acid chain; its full sequence is Small ribosomal subunit protein bS16 (122 aa).

Residues 85-122 are disordered; sequence REAKNNPIKAKPGKRAQERAAEKAQKAADAAAAADAAE. The span at 99–110 shows a compositional bias: basic and acidic residues; sequence RAQERAAEKAQK. A compositionally biased stretch (low complexity) spans 111–122; that stretch reads AADAAAAADAAE.

Belongs to the bacterial ribosomal protein bS16 family.

The sequence is that of Small ribosomal subunit protein bS16 from Rhizobium etli (strain ATCC 51251 / DSM 11541 / JCM 21823 / NBRC 15573 / CFN 42).